Reading from the N-terminus, the 145-residue chain is Copper transporter 6 (145 aa).

The next 2 helical transmembrane spans lie at 47–67 (LGMY…VEWL) and 99–119 (YLVM…AIAG).

Belongs to the copper transporter (Ctr) (TC 1.A.56) family. SLC31A subfamily.

The protein resides in the membrane. Involved in the transport of copper. In Arabidopsis thaliana (Mouse-ear cress), this protein is Copper transporter 6 (COPT6).